A 551-amino-acid chain; its full sequence is Solute carrier family 22 member 4 (551 aa).

Over 1–20 the chain is Cytoplasmic; that stretch reads MRDYDEAIAFLGEWGPFQRL. Residues 21–41 form a helical membrane-spanning segment; that stretch reads IFFLLSASIIPNGFNGMSVVF. The Extracellular segment spans residues 42-141; the sequence is LAGTPEHRCR…WNLVCEDNWK (100 aa). N-linked (GlcNAc...) asparagine glycosylation is found at Asn-57, Asn-64, and Asn-91. The chain crosses the membrane as a helical span at residues 142 to 162; that stretch reads VPLTTSLFFVGVLLGSFVSGQ. Over 163-171 the chain is Cytoplasmic; the sequence is LSDRFGRKN. The helical transmembrane segment at 172 to 192 threads the bilayer; sequence VLFATMAVQTGFSFLQIFSIS. At 193-197 the chain is on the extracellular side; the sequence is WEMFT. Residues 198 to 218 traverse the membrane as a helical segment; sequence VLFLIVGMGQISNYVVAFILG. Residue 218–225 participates in ATP binding; the sequence is GTEILGKS. Residues 219–232 lie on the Cytoplasmic side of the membrane; that stretch reads TEILGKSVRIIFST. Residues 233–253 traverse the membrane as a helical segment; sequence LGVCTFFAVGYMLLPLFAYFI. Residues 254-257 lie on the Extracellular side of the membrane; that stretch reads RDWR. A helical transmembrane segment spans residues 258–278; it reads MLLLALTVPGVLCVPLWWFIP. At 279–337 the chain is on the cytoplasmic side; it reads ESPRWLISQRRFREAEDIIQKAAKMNNIAVPAVIFDSVEELNPLKQQKAFILDLFRTWN. The helical transmembrane segment at 338 to 358 threads the bilayer; it reads IAIMTIMSLLLWMLTSVGYFA. Topologically, residues 359-371 are extracellular; it reads LSLDTPNLHGDAY. Residues 372 to 392 traverse the membrane as a helical segment; it reads LNCFLSALIEIPAYITAWLLL. Over 393-399 the chain is Cytoplasmic; sequence RTLPRRY. The chain crosses the membrane as a helical span at residues 400 to 420; that stretch reads IIAAVLFWGGGVLLFIQLVPV. The Extracellular segment spans residues 421–426; it reads DYYFLS. Residues 427-447 traverse the membrane as a helical segment; sequence IGLVMLGKFGITSAFSMLYVF. Over 448 to 460 the chain is Cytoplasmic; it reads TAELYPTMVRNMA. The chain crosses the membrane as a helical span at residues 461-481; that stretch reads VGVTSMASRVGSIIAPYFVYL. Residues 482–486 lie on the Extracellular side of the membrane; the sequence is GAYNR. A helical membrane pass occupies residues 487-507; it reads MLPYIVMGSLTVLIGILTLFF. Residues 508-551 lie on the Cytoplasmic side of the membrane; sequence PESLGMTLPETLEQMQKVKWFRSGKKTRDSMETEENPKVLITAF.

Belongs to the major facilitator (TC 2.A.1) superfamily. Organic cation transporter (TC 2.A.1.19) family. As to quaternary structure, interacts with PDZK1.

It localises to the apical cell membrane. The protein resides in the basal cell membrane. Its subcellular location is the mitochondrion membrane. The catalysed reaction is ergothioneine(out) + Na(+)(out) = ergothioneine(in) + Na(+)(in). It carries out the reaction acetylcholine(in) = acetylcholine(out). The enzyme catalyses (R)-carnitine(out) + Na(+)(out) = (R)-carnitine(in) + Na(+)(in). It catalyses the reaction glycine betaine(out) + Na(+)(out) = glycine betaine(in) + Na(+)(in). Allosterically activated by intracellular ATP. Its function is as follows. Transporter that mediates the transport of endogenous and microbial zwitterions and organic cations. Functions as a Na(+)-dependent and pH-dependent high affinity microbial symporter of potent food-derived antioxidant ergothioeine. Transports one sodium ion with one ergothioeine molecule. Involved in the absorption of ergothioneine from the luminal/apical side of the small intestine and renal tubular cells, and into non-parenchymal liver cells, thereby contributing to maintain steady-state ergothioneine level in the body. Also mediates the bidirectional transport of acetycholine, although the exact transport mechanism has not been fully identified yet. Most likely exports anti-inflammatory acetylcholine in non-neuronal tissues, thereby contributing to the non-neuronal cholinergic system. Displays a general physiological role linked to better survival by controlling inflammation and oxidative stress, which may be related to ergothioneine and acetycholine transports. May also function as a low-affinity Na(+)-dependent transporter of L-carnitine through the mitochondrial membrane, thereby maintaining intracellular carnitine homeostasis. May contribute to regulate the transport of cationic compounds in testis across the blood-testis-barrier. This is Solute carrier family 22 member 4 (SLC22A4) from Papio anubis (Olive baboon).